A 172-amino-acid chain; its full sequence is MGAILVVLALLSLLGLGSANLNPLDHDPCLDFDPENCTLTFAPDTSRLCGVLIKCGWDCRSVEITHNNKTWNNTLSTTWEPGVPQWYTVSVRGPDGSIRISNNTFIFSEMCDLAMFMSRQYDLWPPSKENIVAFSIAYCLVTCIITAIICVCIHLLIVIRPRQSNEEKEKMP.

An N-terminal signal peptide occupies residues 1-19 (MGAILVVLALLSLLGLGSA). The Lumenal segment spans residues 20–136 (NLNPLDHDPC…SKENIVAFSI (117 aa)). N-linked (GlcNAc...) asparagine; by host glycosylation occurs at asparagine 36. Disulfide bonds link cysteine 37–cysteine 55 and cysteine 49–cysteine 111. Asparagine 68, asparagine 72, and asparagine 102 each carry an N-linked (GlcNAc...) asparagine; by host glycan. The chain crosses the membrane as a helical span at residues 137-157 (AYCLVTCIITAIICVCIHLLI). Topologically, residues 158-172 (VIRPRQSNEEKEKMP) are cytoplasmic. The Di-lysine motif motif lies at 168-172 (KEKMP).

The protein belongs to the adenoviridae E19 family. In terms of processing, both disulfide bonds are absolutely critical for the interaction with MHC antigens. N-glycosylated; high-mannose.

Its subcellular location is the host endoplasmic reticulum membrane. Binds and retains class I heavy chains in the endoplasmic reticulum during the early period of virus infection, thereby impairing their transport to the cell surface. Also delays the expression of class I alleles that it cannot affect by direct retention. Binds transporters associated with antigen processing (TAP) and acts as a tapasin inhibitor, preventing class I/TAP association. In consequence, infected cells are masked for immune recognition by cytotoxic T-lymphocytes. This is Early E3 18.5 kDa glycoprotein from Human adenovirus B serotype 3 (HAdV-3).